Consider the following 803-residue polypeptide: Subtilisin-like protease SBT5.5 (803 aa).

Positions 1–22 (MKRIFGIFIFLSLLLFLVPLLA) are cleaved as a signal peptide. Residues 23–112 (SCTKEKQVYI…KSDPRKYKIH (90 aa)) constitute a propeptide, activation peptide. Residues 30 to 108 (VYIVYFGEHK…VSVFKSDPRK (79 aa)) form the Inhibitor I9 domain. Residues 140 to 656 (KYDVNDRFRV…SRHFRPTKAA (517 aa)) form the Peptidase S8 domain. Residue aspartate 169 is the Charge relay system of the active site. Residue asparagine 202 is glycosylated (N-linked (GlcNAc...) asparagine). Histidine 244 serves as the catalytic Charge relay system. Positions 409 to 504 (YAPLVYAPDV…VFSSTVDRIL (96 aa)) constitute a PA domain. Serine 589 serves as the catalytic Charge relay system. N-linked (GlcNAc...) asparagine glycosylation occurs at asparagine 725.

Belongs to the peptidase S8 family.

Its subcellular location is the secreted. This Arabidopsis thaliana (Mouse-ear cress) protein is Subtilisin-like protease SBT5.5.